The following is a 266-amino-acid chain: Hydroxyacylglutathione hydrolase (266 aa).

The Zn(2+) site is built by His53, His55, Asp57, His58, His118, Asp140, and His178.

The protein belongs to the metallo-beta-lactamase superfamily. Glyoxalase II family. Monomer. It depends on Zn(2+) as a cofactor.

The enzyme catalyses an S-(2-hydroxyacyl)glutathione + H2O = a 2-hydroxy carboxylate + glutathione + H(+). It functions in the pathway secondary metabolite metabolism; methylglyoxal degradation; (R)-lactate from methylglyoxal: step 2/2. Its function is as follows. Thiolesterase that catalyzes the hydrolysis of S-D-lactoyl-glutathione to form glutathione and D-lactic acid. The sequence is that of Hydroxyacylglutathione hydrolase from Cupriavidus taiwanensis (strain DSM 17343 / BCRC 17206 / CCUG 44338 / CIP 107171 / LMG 19424 / R1) (Ralstonia taiwanensis (strain LMG 19424)).